Consider the following 140-residue polypeptide: Glycine cleavage system H protein (140 aa).

Residues 22–104 (EVVIGITRFA…YGKGWMLRLK (83 aa)) form the Lipoyl-binding domain. Position 63 is an N6-lipoyllysine (K63).

Belongs to the GcvH family. As to quaternary structure, the glycine cleavage system is composed of four proteins: P, T, L and H. The cofactor is (R)-lipoate.

In terms of biological role, the glycine cleavage system catalyzes the degradation of glycine. The H protein shuttles the methylamine group of glycine from the P protein to the T protein. The polypeptide is Glycine cleavage system H protein (Magnetococcus marinus (strain ATCC BAA-1437 / JCM 17883 / MC-1)).